The sequence spans 1173 residues: Pyruvate-flavodoxin oxidoreductase (1173 aa).

4Fe-4S ferredoxin-type domains lie at 681–710 (NVPV…PVLI) and 735–766 (YRLA…MQPL). [4Fe-4S] cluster contacts are provided by Cys690, Cys693, Cys696, Cys700, Cys744, Cys747, Cys750, Cys754, Cys810, Cys813, and Cys838. Residues 922–933 (GEGTRERAEKVG) show a composition bias toward basic and acidic residues. The disordered stretch occupies residues 922–946 (GEGTRERAEKVGDTSGFANAREKSR). Cys1075 is a [4Fe-4S] cluster binding site.

This sequence belongs to the pyruvate:ferredoxin/flavodoxin oxidoreductase family. [4Fe-4S] cluster is required as a cofactor.

It catalyses the reaction oxidized [flavodoxin] + pyruvate + CoA + 2 H(+) = reduced [flavodoxin] + acetyl-CoA + CO2. In terms of biological role, oxidoreductase required for the transfer of electrons from pyruvate to flavodoxin, which reduces nitrogenase. The protein is Pyruvate-flavodoxin oxidoreductase (nifJ) of Enterobacter agglomerans (Erwinia herbicola).